Reading from the N-terminus, the 628-residue chain is uncharacterized protein (628 aa).

The protein belongs to the IucA/IucC family.

This is an uncharacterized protein from Sinorhizobium fredii (strain NBRC 101917 / NGR234).